We begin with the raw amino-acid sequence, 271 residues long: Mannosyl-3-phosphoglycerate phosphatase (271 aa).

The active-site Nucleophile is D13. 3 residues coordinate Mg(2+): D13, D15, and D214.

This sequence belongs to the HAD-like hydrolase superfamily. MPGP family. Mg(2+) serves as cofactor.

The protein localises to the cytoplasm. It carries out the reaction 2-O-(alpha-D-mannosyl)-3-phosphoglycerate + H2O = (2R)-2-O-(alpha-D-mannosyl)-glycerate + phosphate. The polypeptide is Mannosyl-3-phosphoglycerate phosphatase (yedP) (Escherichia coli O6:K15:H31 (strain 536 / UPEC)).